A 267-amino-acid chain; its full sequence is Probable ribosomal RNA small subunit methyltransferase A (267 aa).

S-adenosyl-L-methionine-binding residues include L12, G37, E58, D83, and N100.

Belongs to the class I-like SAM-binding methyltransferase superfamily. rRNA adenine N(6)-methyltransferase family. RsmA subfamily.

The protein localises to the cytoplasm. Functionally, specifically dimethylates two adjacent adenosines in the loop of a conserved hairpin near the 3'-end of 16S rRNA in the 30S particle. May play a critical role in biogenesis of 30S subunits. In Methanococcus maripaludis (strain DSM 14266 / JCM 13030 / NBRC 101832 / S2 / LL), this protein is Probable ribosomal RNA small subunit methyltransferase A.